Reading from the N-terminus, the 420-residue chain is Glucose-1-phosphate adenylyltransferase 2 (420 aa).

Residues Y109, G175, 190-191 (EK), and S208 contribute to the alpha-D-glucose 1-phosphate site.

This sequence belongs to the bacterial/plant glucose-1-phosphate adenylyltransferase family. As to quaternary structure, homotetramer.

It carries out the reaction alpha-D-glucose 1-phosphate + ATP + H(+) = ADP-alpha-D-glucose + diphosphate. It functions in the pathway glycan biosynthesis; glycogen biosynthesis. Its function is as follows. Involved in the biosynthesis of ADP-glucose, a building block required for the elongation reactions to produce glycogen. Catalyzes the reaction between ATP and alpha-D-glucose 1-phosphate (G1P) to produce pyrophosphate and ADP-Glc. In Pseudoalteromonas atlantica (strain T6c / ATCC BAA-1087), this protein is Glucose-1-phosphate adenylyltransferase 2.